A 274-amino-acid chain; its full sequence is 2,3,4,5-tetrahydropyridine-2,6-dicarboxylate N-succinyltransferase (274 aa).

Belongs to the transferase hexapeptide repeat family.

It is found in the cytoplasm. The catalysed reaction is (S)-2,3,4,5-tetrahydrodipicolinate + succinyl-CoA + H2O = (S)-2-succinylamino-6-oxoheptanedioate + CoA. It participates in amino-acid biosynthesis; L-lysine biosynthesis via DAP pathway; LL-2,6-diaminopimelate from (S)-tetrahydrodipicolinate (succinylase route): step 1/3. The chain is 2,3,4,5-tetrahydropyridine-2,6-dicarboxylate N-succinyltransferase from Delftia acidovorans (strain DSM 14801 / SPH-1).